Reading from the N-terminus, the 317-residue chain is ADP-L-glycero-D-manno-heptose-6-epimerase (317 aa).

NADP(+)-binding positions include 10-11, 31-32, Q38, K53, 75-79, and N92; these read FI, DD, and QGACS. The active-site Proton acceptor is the Y139. Position 143 (K143) interacts with NADP(+). N166 lines the substrate pocket. 2 residues coordinate NADP(+): V167 and K175. K175 serves as the catalytic Proton acceptor. Substrate is bound by residues G177, H184, 198 to 201, R211, and Y275; that span reads FEGV.

This sequence belongs to the NAD(P)-dependent epimerase/dehydratase family. HldD subfamily. Homopentamer. NADP(+) serves as cofactor.

The enzyme catalyses ADP-D-glycero-beta-D-manno-heptose = ADP-L-glycero-beta-D-manno-heptose. Its pathway is nucleotide-sugar biosynthesis; ADP-L-glycero-beta-D-manno-heptose biosynthesis; ADP-L-glycero-beta-D-manno-heptose from D-glycero-beta-D-manno-heptose 7-phosphate: step 4/4. In terms of biological role, catalyzes the interconversion between ADP-D-glycero-beta-D-manno-heptose and ADP-L-glycero-beta-D-manno-heptose via an epimerization at carbon 6 of the heptose. The sequence is that of ADP-L-glycero-D-manno-heptose-6-epimerase from Shewanella frigidimarina (strain NCIMB 400).